We begin with the raw amino-acid sequence, 112 residues long: MAIVLIDPESQIAMDAVTGAVAEWSEDVVTLDVMPLYEKVEELEQYVNDMMRAMDPSTTTWGTLPGREGVHETAGFLTNFAHGFVIGTMIVALVAFTLAAVYKLHALRLLGL.

Residues 80–100 (FAHGFVIGTMIVALVAFTLAA) form a helical membrane-spanning segment.

Belongs to the MtrB family. The complex is composed of 8 subunits; MtrA, MtrB, MtrC, MtrD, MtrE, MtrF, MtrG and MtrH.

The protein localises to the cell membrane. The enzyme catalyses 5-methyl-5,6,7,8-tetrahydromethanopterin + coenzyme M + 2 Na(+)(in) = 5,6,7,8-tetrahydromethanopterin + methyl-coenzyme M + 2 Na(+)(out). It functions in the pathway one-carbon metabolism; methanogenesis from CO(2); methyl-coenzyme M from 5,10-methylene-5,6,7,8-tetrahydromethanopterin: step 2/2. Functionally, part of a complex that catalyzes the formation of methyl-coenzyme M and tetrahydromethanopterin from coenzyme M and methyl-tetrahydromethanopterin. This is an energy-conserving, sodium-ion translocating step. The polypeptide is Tetrahydromethanopterin S-methyltransferase subunit B (mtrB) (Methanopyrus kandleri (strain AV19 / DSM 6324 / JCM 9639 / NBRC 100938)).